The following is a 371-amino-acid chain: Cyanide hydratase (371 aa).

Residues 8–286 form the CN hydrolase domain; sequence YKAAAVQAEP…EGLMFVEIDL (279 aa). Glu48 serves as the catalytic Proton acceptor. The active site involves Lys130. The Nucleophile role is filled by Cys165. Residues 326-356 are disordered; that stretch reads DGGIGTYNTQDRVGLNRPLDAPKVDGPSGVS.

This sequence belongs to the carbon-nitrogen hydrolase superfamily. Nitrilase family. As to quaternary structure, oligomer of dimers, forming left-handed helical fibers.

The catalysed reaction is formamide = hydrogen cyanide + H2O. Catalyzes the hydration of cyanide to formamide. Degradation of cyanide may be important for plant pathogenic fungi in infection of cyanogenic plants. Can also transform some nitriles like 2-cyanopyridine and fumaronitrile and has a minor activity with 4-cyanophenyl acetonitrile (4-CPA). In Botryotinia fuckeliana (strain T4) (Noble rot fungus), this protein is Cyanide hydratase.